The chain runs to 160 residues: ATP synthase subunit delta, mitochondrial (160 aa).

The transit peptide at methionine 1–tyrosine 22 directs the protein to the mitochondrion.

It belongs to the ATPase epsilon chain family. As to quaternary structure, F-type ATPases have 2 components, CF(1) - the catalytic core - and CF(0) - the membrane proton channel. CF(1) has five subunits: alpha(3), beta(3), gamma(1), delta(1), epsilon(1). CF(0) has three main subunits: a, b and c.

Its subcellular location is the mitochondrion. The protein localises to the mitochondrion inner membrane. In terms of biological role, mitochondrial membrane ATP synthase (F(1)F(0) ATP synthase or Complex V) produces ATP from ADP in the presence of a proton gradient across the membrane which is generated by electron transport complexes of the respiratory chain. F-type ATPases consist of two structural domains, F(1) - containing the extramembraneous catalytic core, and F(0) - containing the membrane proton channel, linked together by a central stalk and a peripheral stalk. During catalysis, ATP turnover in the catalytic domain of F(1) is coupled via a rotary mechanism of the central stalk subunits to proton translocation. Part of the complex F(1) domain and of the central stalk which is part of the complex rotary element. Rotation of the central stalk against the surrounding alpha(3)beta(3) subunits leads to hydrolysis of ATP in three separate catalytic sites on the beta subunits. This is ATP synthase subunit delta, mitochondrial (ATP16) from Saccharomyces cerevisiae (strain ATCC 204508 / S288c) (Baker's yeast).